Consider the following 152-residue polypeptide: Membrane-spanning 4-domains subfamily A member 13 (152 aa).

The next 4 helical transmembrane spans lie at 1–21 (MIGI…MGQI), 32–52 (TYKT…VFLI), 66–86 (TLII…LTII), and 111–131 (ILLF…IYSC).

The protein belongs to the MS4A family.

Its subcellular location is the membrane. Its function is as follows. May be involved in signal transduction as a component of a multimeric receptor complex. The protein is Membrane-spanning 4-domains subfamily A member 13 (MS4A13) of Homo sapiens (Human).